The primary structure comprises 65 residues: Large ribosomal subunit protein bL35 (65 aa).

Belongs to the bacterial ribosomal protein bL35 family.

This chain is Large ribosomal subunit protein bL35, found in Burkholderia ambifaria (strain MC40-6).